The sequence spans 438 residues: Xylose isomerase (438 aa).

Catalysis depends on residues H100 and D103. 7 residues coordinate Mg(2+): E231, E267, H270, D295, D306, D308, and D338.

The protein belongs to the xylose isomerase family. In terms of assembly, homotetramer. The cofactor is Mg(2+).

It localises to the cytoplasm. The enzyme catalyses alpha-D-xylose = alpha-D-xylulofuranose. The polypeptide is Xylose isomerase (Pseudomonas fluorescens (strain Pf0-1)).